We begin with the raw amino-acid sequence, 112 residues long: Transmembrane protein 14C (112 aa).

A run of 4 helical transmembrane segments spans residues 7–27, 32–52, 62–82, and 88–108; these read VVPL…GGII, AGSV…GLGA, VWVF…RFYH, and PAGL…VSMF.

It belongs to the TMEM14 family.

The protein localises to the mitochondrion membrane. In terms of biological role, required for normal heme biosynthesis. This is Transmembrane protein 14C (TMEM14C) from Homo sapiens (Human).